The following is an 887-amino-acid chain: Alanine--tRNA ligase (887 aa).

The segment covering 425-441 has biased composition (basic and acidic residues); it reads MQEQKSRARSDRREKQQ. The tract at residues 425–448 is disordered; the sequence is MQEQKSRARSDRREKQQTGDGAGS. Residues His-569, His-573, Cys-672, and His-676 each contribute to the Zn(2+) site.

It belongs to the class-II aminoacyl-tRNA synthetase family. Zn(2+) is required as a cofactor.

It localises to the cytoplasm. It carries out the reaction tRNA(Ala) + L-alanine + ATP = L-alanyl-tRNA(Ala) + AMP + diphosphate. Catalyzes the attachment of alanine to tRNA(Ala) in a two-step reaction: alanine is first activated by ATP to form Ala-AMP and then transferred to the acceptor end of tRNA(Ala). Also edits incorrectly charged Ser-tRNA(Ala) and Gly-tRNA(Ala) via its editing domain. This is Alanine--tRNA ligase from Chlorobium luteolum (strain DSM 273 / BCRC 81028 / 2530) (Pelodictyon luteolum).